A 118-amino-acid chain; its full sequence is HTH-type transcriptional regulator CmtR (118 aa).

Residues 3 to 97 form the HTH arsR-type domain; it reads TCEMRESALA…ELVQVVLAVD (95 aa). The Cd(2+) site is built by cysteine 57, cysteine 61, and cysteine 102.

Homodimer.

Functionally, metal-responsive transcriptional repressor for the cmt operon. Binding of cadmium or lead causes the repressor to dissociate from the DNA. This Mycobacterium bovis (strain ATCC BAA-935 / AF2122/97) protein is HTH-type transcriptional regulator CmtR (cmtR).